The following is a 304-amino-acid chain: Release factor glutamine methyltransferase (304 aa).

Residues aspartate 144 and asparagine 188 each coordinate S-adenosyl-L-methionine. 188–191 (NPPY) is a substrate binding site.

This sequence belongs to the protein N5-glutamine methyltransferase family. PrmC subfamily.

It catalyses the reaction L-glutaminyl-[peptide chain release factor] + S-adenosyl-L-methionine = N(5)-methyl-L-glutaminyl-[peptide chain release factor] + S-adenosyl-L-homocysteine + H(+). In terms of biological role, methylates the class 1 translation termination release factors RF1/PrfA and RF2/PrfB on the glutamine residue of the universally conserved GGQ motif. This chain is Release factor glutamine methyltransferase, found in Mycobacterium tuberculosis (strain ATCC 25618 / H37Rv).